A 243-amino-acid chain; its full sequence is Orotidine 5'-phosphate decarboxylase (243 aa).

Substrate-binding positions include aspartate 16, lysine 38, 65–74 (DLKLHDIPNT), threonine 120, arginine 181, glutamine 190, glycine 210, and arginine 211. Lysine 67 functions as the Proton donor in the catalytic mechanism.

The protein belongs to the OMP decarboxylase family. Type 1 subfamily. In terms of assembly, homodimer.

The catalysed reaction is orotidine 5'-phosphate + H(+) = UMP + CO2. The protein operates within pyrimidine metabolism; UMP biosynthesis via de novo pathway; UMP from orotate: step 2/2. Its function is as follows. Catalyzes the decarboxylation of orotidine 5'-monophosphate (OMP) to uridine 5'-monophosphate (UMP). This chain is Orotidine 5'-phosphate decarboxylase, found in Bradyrhizobium sp. (strain ORS 278).